Here is a 150-residue protein sequence, read N- to C-terminus: Large ribosomal subunit protein bL9 (150 aa).

Belongs to the bacterial ribosomal protein bL9 family.

Binds to the 23S rRNA. This Idiomarina loihiensis (strain ATCC BAA-735 / DSM 15497 / L2-TR) protein is Large ribosomal subunit protein bL9.